The primary structure comprises 381 residues: tRNA-cytidine(32) 2-sulfurtransferase (381 aa).

The PP-loop motif signature appears at 101-106 (SGGKDS). [4Fe-4S] cluster is bound by residues C176, C179, and C267.

The protein belongs to the TtcA family. In terms of assembly, homodimer. It depends on Mg(2+) as a cofactor. [4Fe-4S] cluster is required as a cofactor.

It is found in the cytoplasm. It carries out the reaction cytidine(32) in tRNA + S-sulfanyl-L-cysteinyl-[cysteine desulfurase] + AH2 + ATP = 2-thiocytidine(32) in tRNA + L-cysteinyl-[cysteine desulfurase] + A + AMP + diphosphate + H(+). Its pathway is tRNA modification. In terms of biological role, catalyzes the ATP-dependent 2-thiolation of cytidine in position 32 of tRNA, to form 2-thiocytidine (s(2)C32). The sulfur atoms are provided by the cysteine/cysteine desulfurase (IscS) system. This is tRNA-cytidine(32) 2-sulfurtransferase from Psychrobacter arcticus (strain DSM 17307 / VKM B-2377 / 273-4).